The chain runs to 632 residues: Biosynthetic arginine decarboxylase (632 aa).

Lysine 101 bears the N6-(pyridoxal phosphate)lysine mark. 281-291 (FDVGGGLGVDY) provides a ligand contact to substrate.

Belongs to the Orn/Lys/Arg decarboxylase class-II family. SpeA subfamily. It depends on Mg(2+) as a cofactor. Pyridoxal 5'-phosphate serves as cofactor.

The enzyme catalyses L-arginine + H(+) = agmatine + CO2. Its pathway is amine and polyamine biosynthesis; agmatine biosynthesis; agmatine from L-arginine: step 1/1. In terms of biological role, catalyzes the biosynthesis of agmatine from arginine. The protein is Biosynthetic arginine decarboxylase of Salmonella dublin (strain CT_02021853).